The chain runs to 368 residues: MTMAKNILRAITAIVRRDAKTPDTDDSAGSVTFDGALDDLDVAGLVEVGRGPIADIAIDADRETIVVTNSAADCLTVINPYTLAPVGSVRLNGEPFAVAAADDRAYVSVVTAGHDAIKVVDTITGSVLAEYPLAMTVTALAMSPDGKRVFVGRSGHDRIDVAVIDTAAERVGTIDLASGAGAGVDALRVDASGKRLYVATTDPRGSRMVTVNIETAQIESTVWIGAPIRDLALGADGKALVLTSDRQRRGVVHIVDLSTAAVVGAIQIGGAPTQLVLSPDATRAYVVDYDRVIVLCTLTNEILGSIDVGMQPAAVAVRRDGARVYVADYSGQVNAFDVAAELPALYSRLVASEPRQDATTVLPSLQTA.

Interacts with MmpL3 and TtfA.

It is found in the cell septum. It localises to the cell tip. Its function is as follows. Stabilizes the MmpL3/TtfA trehalose monomycolate (TMM) transport complex under stress conditions. The polypeptide is Seven-bladed beta-propeller protein MSMEG_5308 (Mycolicibacterium smegmatis (strain ATCC 700084 / mc(2)155) (Mycobacterium smegmatis)).